The primary structure comprises 267 residues: 2-keto-3-deoxy-L-rhamnonate aldolase (267 aa).

His49 serves as the catalytic Proton acceptor. A substrate-binding site is contributed by Gln151. Residue Glu153 participates in Mg(2+) binding. Substrate contacts are provided by Ala178 and Asp179. Asp179 provides a ligand contact to Mg(2+).

It belongs to the HpcH/HpaI aldolase family. KDR aldolase subfamily. Homohexamer. Requires Mg(2+) as cofactor.

It carries out the reaction 2-dehydro-3-deoxy-L-rhamnonate = (S)-lactaldehyde + pyruvate. Functionally, catalyzes the reversible retro-aldol cleavage of 2-keto-3-deoxy-L-rhamnonate (KDR) to pyruvate and lactaldehyde. This chain is 2-keto-3-deoxy-L-rhamnonate aldolase, found in Salmonella enteritidis PT4 (strain P125109).